The chain runs to 314 residues: Bis(5'-nucleosyl)-tetraphosphatase, symmetrical (314 aa).

The interval 267–314 (QVPGNPITHPPKTAQRPRQPRRRQRQRGGDQAQTGPAPTPASTGPAGG) is disordered. The span at 297-314 (QAQTGPAPTPASTGPAGG) shows a compositional bias: low complexity.

Belongs to the Ap4A hydrolase family.

It catalyses the reaction P(1),P(4)-bis(5'-adenosyl) tetraphosphate + H2O = 2 ADP + 2 H(+). Functionally, hydrolyzes diadenosine 5',5'''-P1,P4-tetraphosphate to yield ADP. The polypeptide is Bis(5'-nucleosyl)-tetraphosphatase, symmetrical (Xanthomonas axonopodis pv. citri (strain 306)).